Consider the following 611-residue polypeptide: Protein Spindly-A (611 aa).

Residues 1–390 are a coiled coil; the sequence is MEESETVLKL…KENEKIKDEL (390 aa). The tract at residues 487 to 611 is disordered; sequence TCTAESTDGR…PNATTQCPQQ (125 aa). Over residues 493–511 the composition is skewed to basic and acidic residues; the sequence is TDGRIHSKEDLSLSTKEQD. Residues 552-567 show a composition bias toward polar residues; sequence HNCSVTSASPRSTSED. Basic and acidic residues predominate over residues 570–583; sequence SESKRFDEEQEKRK. A compositionally biased stretch (polar residues) spans 602 to 611; that stretch reads PNATTQCPQQ.

Belongs to the Spindly family.

Its subcellular location is the chromosome. The protein resides in the centromere. It localises to the kinetochore. In terms of biological role, required for the localization of dynein and dynactin to the mitotic kintochore. Dynein is believed to control the initial lateral interaction between the kinetochore and spindle microtubules and to facilitate the subsequent formation of end-on kinetochore-microtubule attachments mediated by the NDC80 complex. The sequence is that of Protein Spindly-A (spdl1-a) from Xenopus laevis (African clawed frog).